The following is a 469-amino-acid chain: UDP-N-acetylmuramate--L-alanine ligase (469 aa).

ATP is bound at residue 123–129 (GSHGKTT).

It belongs to the MurCDEF family.

Its subcellular location is the cytoplasm. The enzyme catalyses UDP-N-acetyl-alpha-D-muramate + L-alanine + ATP = UDP-N-acetyl-alpha-D-muramoyl-L-alanine + ADP + phosphate + H(+). It participates in cell wall biogenesis; peptidoglycan biosynthesis. In terms of biological role, cell wall formation. The chain is UDP-N-acetylmuramate--L-alanine ligase from Synechococcus sp. (strain CC9605).